Here is a 363-residue protein sequence, read N- to C-terminus: Chorismate synthase (363 aa).

The NADP(+) site is built by Arg47 and Arg53. FMN-binding positions include 124–126 (RSS), Gly286, 301–305 (KPTAT), and Arg327.

This sequence belongs to the chorismate synthase family. As to quaternary structure, homotetramer. The cofactor is FMNH2.

It catalyses the reaction 5-O-(1-carboxyvinyl)-3-phosphoshikimate = chorismate + phosphate. It functions in the pathway metabolic intermediate biosynthesis; chorismate biosynthesis; chorismate from D-erythrose 4-phosphate and phosphoenolpyruvate: step 7/7. Its function is as follows. Catalyzes the anti-1,4-elimination of the C-3 phosphate and the C-6 proR hydrogen from 5-enolpyruvylshikimate-3-phosphate (EPSP) to yield chorismate, which is the branch point compound that serves as the starting substrate for the three terminal pathways of aromatic amino acid biosynthesis. This reaction introduces a second double bond into the aromatic ring system. This Thermosynechococcus vestitus (strain NIES-2133 / IAM M-273 / BP-1) protein is Chorismate synthase.